The primary structure comprises 350 residues: Membrane progestin receptor alpha (350 aa).

Over 1 to 80 (MATMVAQKLS…HNEAVNVWTH (80 aa)) the chain is Cytoplasmic. A helical transmembrane segment spans residues 81-101 (LLAALVLLLRLAIFVGTVDFW). Over 102 to 105 (GDPH) the chain is Extracellular. A helical transmembrane segment spans residues 106-126 (ALPLFIIVLASFTYLSLSALA). At 127–139 (HLLQAKSEFWHYS) the chain is on the cytoplasmic side. Residues 140–160 (FFFLDYVGVAVYQFGSALAHF) traverse the membrane as a helical segment. Residues 161–165 (YYAIE) are Extracellular-facing. A helical transmembrane segment spans residues 166–186 (PAWHAQVQTIFLPMAAFLAWL). At 187 to 239 (SCTGSCYNKYIQKPGLLGRTCQEVPSALAYALDISPVAHRILASPEPATDDPA) the chain is on the cytoplasmic side. A helical membrane pass occupies residues 240-260 (LLYHKCQVVFFLLAAAFFSAF). At 261–278 (MPERWFPGSCHIFGQGHQ) the chain is on the extracellular side. A helical transmembrane segment spans residues 279–299 (LFHVFLVLCTLAQLEAVALDY). Residues 300-318 (EARRPIYEPLHTRWPHNFS) are Cytoplasmic-facing. A helical transmembrane segment spans residues 319–339 (GLFLLTVGSSILTAFLLSQLV). Over 340 to 350 (RRKLDLDRKTQ) the chain is Extracellular.

The protein belongs to the ADIPOR family.

The protein localises to the cell membrane. In terms of biological role, plasma membrane progesterone (P4) receptor coupled to G proteins. Seems to act through a G(i) mediated pathway. May be involved in oocyte maturation. Involved in neurosteroid inhibition of apoptosis. Also binds dehydroepiandrosterone (DHEA), pregnanolone, pregnenolone and allopregnanolone. This chain is Membrane progestin receptor alpha (PAQR7), found in Sus scrofa (Pig).